The primary structure comprises 188 residues: MTNVIKYLAEGEALPLEDHPSVLLPASYDIVWSLVVFIIVLILFWKFVRPKYQEVLTEREDRIKGGIQRAEAAQAEAKAALEKYNAQLAEARAEAAEIREEARAKGKQIEAEMKAKATEESNRIIESGEKQLAAQREQVVTELRREMGQNSISLAERLLGDQLSDDVKRSGTIDKFLAELDTVSPAGK.

The chain crosses the membrane as a helical span at residues 24–44 (LPASYDIVWSLVVFIIVLILF).

This sequence belongs to the ATPase B chain family. As to quaternary structure, F-type ATPases have 2 components, F(1) - the catalytic core - and F(0) - the membrane proton channel. F(1) has five subunits: alpha(3), beta(3), gamma(1), delta(1), epsilon(1). F(0) has three main subunits: a(1), b(2) and c(10-14). The alpha and beta chains form an alternating ring which encloses part of the gamma chain. F(1) is attached to F(0) by a central stalk formed by the gamma and epsilon chains, while a peripheral stalk is formed by the delta and b chains.

The protein localises to the cell membrane. F(1)F(0) ATP synthase produces ATP from ADP in the presence of a proton or sodium gradient. F-type ATPases consist of two structural domains, F(1) containing the extramembraneous catalytic core and F(0) containing the membrane proton channel, linked together by a central stalk and a peripheral stalk. During catalysis, ATP synthesis in the catalytic domain of F(1) is coupled via a rotary mechanism of the central stalk subunits to proton translocation. Its function is as follows. Component of the F(0) channel, it forms part of the peripheral stalk, linking F(1) to F(0). The polypeptide is ATP synthase subunit b (Corynebacterium diphtheriae (strain ATCC 700971 / NCTC 13129 / Biotype gravis)).